A 235-amino-acid chain; its full sequence is tRNA pseudouridine synthase B (235 aa).

The active-site Nucleophile is the aspartate 45.

It belongs to the pseudouridine synthase TruB family. Type 1 subfamily.

The enzyme catalyses uridine(55) in tRNA = pseudouridine(55) in tRNA. In terms of biological role, responsible for synthesis of pseudouridine from uracil-55 in the psi GC loop of transfer RNAs. This Chlamydia pneumoniae (Chlamydophila pneumoniae) protein is tRNA pseudouridine synthase B.